Reading from the N-terminus, the 251-residue chain is Hydroxyacylglutathione hydrolase GloB (251 aa).

The Zn(2+) site is built by His-53, His-55, Asp-57, His-58, His-110, and Asp-127. Substrate-binding positions include 136–138, 165–167, and 245–248; these read RLF, HEY, and RSKK. A Zn(2+)-binding site is contributed by His-165.

Belongs to the metallo-beta-lactamase superfamily. Glyoxalase II family. In terms of assembly, monomer. Zn(2+) serves as cofactor.

The enzyme catalyses an S-(2-hydroxyacyl)glutathione + H2O = a 2-hydroxy carboxylate + glutathione + H(+). It catalyses the reaction (R)-S-lactoylglutathione + H2O = (R)-lactate + glutathione + H(+). It participates in secondary metabolite metabolism; methylglyoxal degradation; (R)-lactate from methylglyoxal: step 2/2. Is inhibited by Cu(2+). Functionally, type II glyoxalase that catalyzes the hydrolysis of (R)-S-lactoylglutathione to (R)-lactate and glutathione. Is more efficient than the isozyme GloC, and plays a major contribution to methylglyoxal (MG) detoxification in E.coli. The two isoenzymes have additive effects and ensure maximal MG degradation. This is Hydroxyacylglutathione hydrolase GloB from Escherichia coli (strain K12).